We begin with the raw amino-acid sequence, 173 residues long: RNA pyrophosphohydrolase (173 aa).

One can recognise a Nudix hydrolase domain in the interval 6–149 (GFRANVGIII…KRDVYRKVMK (144 aa)). The short motif at 38–59 (GGVDEGESAEEAMYRELYEEVG) is the Nudix box element.

Belongs to the Nudix hydrolase family. RppH subfamily. It depends on a divalent metal cation as a cofactor.

In terms of biological role, accelerates the degradation of transcripts by removing pyrophosphate from the 5'-end of triphosphorylated RNA, leading to a more labile monophosphorylated state that can stimulate subsequent ribonuclease cleavage. This chain is RNA pyrophosphohydrolase, found in Shewanella piezotolerans (strain WP3 / JCM 13877).